The chain runs to 72 residues: Translation initiation factor IF-1 (72 aa).

One can recognise an S1-like domain in the interval 1-72 (MSKDDVIEMQ…SRGRITWRAK (72 aa)).

It belongs to the IF-1 family. Component of the 30S ribosomal translation pre-initiation complex which assembles on the 30S ribosome in the order IF-2 and IF-3, IF-1 and N-formylmethionyl-tRNA(fMet); mRNA recruitment can occur at any time during PIC assembly.

The protein resides in the cytoplasm. One of the essential components for the initiation of protein synthesis. Stabilizes the binding of IF-2 and IF-3 on the 30S subunit to which N-formylmethionyl-tRNA(fMet) subsequently binds. Helps modulate mRNA selection, yielding the 30S pre-initiation complex (PIC). Upon addition of the 50S ribosomal subunit IF-1, IF-2 and IF-3 are released leaving the mature 70S translation initiation complex. This chain is Translation initiation factor IF-1, found in Clostridium novyi (strain NT).